We begin with the raw amino-acid sequence, 1145 residues long: Protocadherin-19 (1145 aa).

A signal peptide spans Met1–Ala21. Cadherin domains lie at Leu22–Phe129, Pro130–Phe238, Gly239–Ile346, Ser350–Phe453, Ser454–Ile563, and Ile569–Met672. Residues Leu22–Ser678 lie on the Extracellular side of the membrane. Ca(2+) is bound by residues Glu31, Glu32, Asp88, and Asp90. A disulfide bond links Cys93 and Cys99. Ca(2+)-binding residues include Asp121, Asn123, Asp124, Asn125, Glu140, Asp155, Asp157, Glu199, Asp212, Asp230, Ser231, Asn232, Asp233, Asn234, and Glu249. An N-linked (GlcNAc...) asparagine glycan is attached at Asn261. Asp264, Asp266, Asn270, Asp305, Glu307, Asp338, Asn340, Asp341, Asn342, Glu360, Asp375, Asp377, Asn381, Asp412, and Glu414 together coordinate Ca(2+). Asn420 is a glycosylation site (N-linked (GlcNAc...) asparagine). Residues Asp427, Asp445, Glu446, Asn447, Asp448, Asn449, Glu464, Asp479, Asp481, Asn485, Asn522, Glu524, and Asp537 each coordinate Ca(2+). N-linked (GlcNAc...) asparagine glycosylation occurs at Asn485. Asn546 carries N-linked (GlcNAc...) asparagine glycosylation. Residues Asp555, Val556, Asn557, Asp558, and Asn559 each contribute to the Ca(2+) site. Asn570 is a glycosylation site (N-linked (GlcNAc...) asparagine). 4 residues coordinate Ca(2+): Asp594, Asp596, Asn600, and Asp646. Asn676 carries N-linked (GlcNAc...) asparagine glycosylation. Residues Leu679–Val699 form a helical membrane-spanning segment. The Cytoplasmic segment spans residues Ala700–Leu1145. Disordered stretches follow at residues Gly901–Val921 and Leu1094–Leu1145. Composition is skewed to basic and acidic residues over residues Asp906–Val921 and Ser1106–Leu1145.

Homodimer; antiparallel.

The protein resides in the cell membrane. Its function is as follows. Calcium-dependent cell-adhesion protein. The sequence is that of Protocadherin-19 (Pcdh19) from Mus musculus (Mouse).